Here is a 554-residue protein sequence, read N- to C-terminus: Glucose-6-phosphate isomerase (554 aa).

Catalysis depends on Glu359, which acts as the Proton donor. Catalysis depends on residues His390 and Lys518.

The protein belongs to the GPI family.

It localises to the cytoplasm. It catalyses the reaction alpha-D-glucose 6-phosphate = beta-D-fructose 6-phosphate. The protein operates within carbohydrate biosynthesis; gluconeogenesis. It functions in the pathway carbohydrate degradation; glycolysis; D-glyceraldehyde 3-phosphate and glycerone phosphate from D-glucose: step 2/4. In terms of biological role, catalyzes the reversible isomerization of glucose-6-phosphate to fructose-6-phosphate. The protein is Glucose-6-phosphate isomerase of Pseudomonas entomophila (strain L48).